Consider the following 670-residue polypeptide: Transketolase (670 aa).

Residue H31 participates in substrate binding. Thiamine diphosphate is bound by residues H71 and 120 to 122; that span reads GPL. D161 is a binding site for Mg(2+). Positions 162 and 191 each coordinate thiamine diphosphate. Residues N191 and I193 each coordinate Mg(2+). The substrate site is built by H268, R362, and S389. H268 contributes to the thiamine diphosphate binding site. The active-site Proton donor is E416. Residue F443 participates in thiamine diphosphate binding. Substrate contacts are provided by H467, D475, and R528.

Homodimer. Mg(2+) is required as a cofactor. Requires Ca(2+) as cofactor. The cofactor is Mn(2+). Co(2+) serves as cofactor. It depends on thiamine diphosphate as a cofactor.

It carries out the reaction D-sedoheptulose 7-phosphate + D-glyceraldehyde 3-phosphate = aldehydo-D-ribose 5-phosphate + D-xylulose 5-phosphate. Its function is as follows. Catalyzes the transfer of a two-carbon ketol group from a ketose donor to an aldose acceptor, via a covalent intermediate with the cofactor thiamine pyrophosphate. This chain is Transketolase (tkt), found in Nostoc sp. (strain PCC 7120 / SAG 25.82 / UTEX 2576).